Consider the following 450-residue polypeptide: GTPase Der (450 aa).

EngA-type G domains follow at residues 3–170 and 183–356; these read PTIA…LATG and LKIA…AECS. Residues 9–16, 56–60, 122–125, 189–196, 236–240, and 301–304 each bind GTP; these read GRPNVGKS, DTGGL, NKVD, GRPNAGKS, DTAGV, and NKID. In terms of domain architecture, KH-like spans 357–441; it reads LRISTGQLNR…PLNIVFRSTF (85 aa).

The protein belongs to the TRAFAC class TrmE-Era-EngA-EngB-Septin-like GTPase superfamily. EngA (Der) GTPase family. Associates with the 50S ribosomal subunit.

In terms of biological role, GTPase that plays an essential role in the late steps of ribosome biogenesis. The protein is GTPase Der of Maridesulfovibrio salexigens (strain ATCC 14822 / DSM 2638 / NCIMB 8403 / VKM B-1763) (Desulfovibrio salexigens).